A 97-amino-acid polypeptide reads, in one-letter code: Large ribosomal subunit protein uL23 (97 aa).

The protein belongs to the universal ribosomal protein uL23 family. In terms of assembly, part of the 50S ribosomal subunit. Contacts protein L29, and trigger factor when it is bound to the ribosome.

Its function is as follows. One of the early assembly proteins it binds 23S rRNA. One of the proteins that surrounds the polypeptide exit tunnel on the outside of the ribosome. Forms the main docking site for trigger factor binding to the ribosome. This chain is Large ribosomal subunit protein uL23, found in Pelagibacter ubique (strain HTCC1062).